A 256-amino-acid chain; its full sequence is Ferritin-3, chloroplastic (256 aa).

A chloroplast-targeting transit peptide spans 1 to 54 (MALSCSKVLTFSLSSVVGGDDAKKKLSLCSSSSLSASVNGGGSRNMRVCAAASN). The segment at 55-87 (APAPLTGVIFEPFQELKKDYLAVPIAPNVSLSR) is extension peptide (EP). The Ferritin-like diiron domain occupies 88 to 241 (QNYSDEAEAA…EYVTQLRLVG (154 aa)). Residues E105, E140, H143, E189, and Q223 each contribute to the Fe cation site.

It belongs to the ferritin family. Oligomer of 24 subunits. There are two types of subunits: L (light) chain and H (heavy) chain. The major chain can be light or heavy, depending on the species and tissue type. The functional molecule forms a roughly spherical shell with a diameter of 12 nm and contains a central cavity into which the insoluble mineral iron core is deposited.

It localises to the plastid. It is found in the chloroplast. It catalyses the reaction 4 Fe(2+) + O2 + 4 H(+) = 4 Fe(3+) + 2 H2O. Stores iron in a soluble, non-toxic, readily available form. Important for iron homeostasis. Has ferroxidase activity. Iron is taken up in the ferrous form and deposited as ferric hydroxides after oxidation. This chain is Ferritin-3, chloroplastic, found in Vigna unguiculata (Cowpea).